The sequence spans 181 residues: Methanesulfonate monooxygenase hydroxylase subunit beta (181 aa).

The protein belongs to the bacterial ring-hydroxylating dioxygenase beta subunit family. In terms of assembly, the MSA monooxygenase system consists of 4 proteins: the 2 subunits of the hydroxylase component (MsmA and MsmB), a ferredoxin (MsmC) and a ferredoxin reductase (MsmD). The hydroxylase component consists of a 3 alpha (MsmA) and 3 beta (MsmB) subunits.

It localises to the cytoplasm. The enzyme catalyses methanesulfonate + NADH + O2 = sulfite + formaldehyde + NAD(+) + H2O. With respect to regulation, MSAMO is inhibited by metal chelators (such as bathophenanthroline, bathocuprione, neocuprione, alpha-alpha-dipyridil and sodium EDTA) and by sodium azide, sodium arsenate and potassium cyanide. Functionally, methanesulfonate monooxygenase (MSAMO) mediates the primary degradation of methanesulfonic acid (MSA) to produce formaldehyd and inorganic sulfite by initial hydroxylation of the carbon atom prior to spontaneous cleavage of the unstable hydroxymethanesulfonic acid. MSAMO has a restricted substrate range that includes only the short-chain aliphatic sulfonates (methane- to butanesulfonate) and excludes all larger molecules, such as arylsulfonates and aromatic sulfonates. All MSAMO components are required for enzyme activity. This Methylosulfonomonas methylovora protein is Methanesulfonate monooxygenase hydroxylase subunit beta.